Here is a 166-residue protein sequence, read N- to C-terminus: ATP synthase subunit b (166 aa).

The chain crosses the membrane as a helical span at residues 27-47; the sequence is FFVVLLIFLIVLGVIAKWVVP. Positions 124 to 143 are disordered; it reads SADQQLSQQGSAAQSELQSS.

It belongs to the ATPase B chain family. In terms of assembly, F-type ATPases have 2 components, F(1) - the catalytic core - and F(0) - the membrane proton channel. F(1) has five subunits: alpha(3), beta(3), gamma(1), delta(1), epsilon(1). F(0) has three main subunits: a(1), b(2) and c(10-14). The alpha and beta chains form an alternating ring which encloses part of the gamma chain. F(1) is attached to F(0) by a central stalk formed by the gamma and epsilon chains, while a peripheral stalk is formed by the delta and b chains.

Its subcellular location is the cell membrane. F(1)F(0) ATP synthase produces ATP from ADP in the presence of a proton or sodium gradient. F-type ATPases consist of two structural domains, F(1) containing the extramembraneous catalytic core and F(0) containing the membrane proton channel, linked together by a central stalk and a peripheral stalk. During catalysis, ATP synthesis in the catalytic domain of F(1) is coupled via a rotary mechanism of the central stalk subunits to proton translocation. Functionally, component of the F(0) channel, it forms part of the peripheral stalk, linking F(1) to F(0). The protein is ATP synthase subunit b of Mycolicibacterium vanbaalenii (strain DSM 7251 / JCM 13017 / BCRC 16820 / KCTC 9966 / NRRL B-24157 / PYR-1) (Mycobacterium vanbaalenii).